A 391-amino-acid polypeptide reads, in one-letter code: Dual-specificity RNA methyltransferase RlmN (391 aa).

The Proton acceptor role is filled by E115. Positions 121–363 constitute a Radical SAM core domain; that stretch reads EENRGTLCIS…SPIRTPRGED (243 aa). C128 and C368 are disulfide-bonded. [4Fe-4S] cluster-binding residues include C135, C139, and C142. Residues 194-195, S226, 248-250, and N325 contribute to the S-adenosyl-L-methionine site; these read GE and SFH. C368 (S-methylcysteine intermediate) is an active-site residue.

Belongs to the radical SAM superfamily. RlmN family. The cofactor is [4Fe-4S] cluster.

It localises to the cytoplasm. It carries out the reaction adenosine(2503) in 23S rRNA + 2 reduced [2Fe-2S]-[ferredoxin] + 2 S-adenosyl-L-methionine = 2-methyladenosine(2503) in 23S rRNA + 5'-deoxyadenosine + L-methionine + 2 oxidized [2Fe-2S]-[ferredoxin] + S-adenosyl-L-homocysteine. The enzyme catalyses adenosine(37) in tRNA + 2 reduced [2Fe-2S]-[ferredoxin] + 2 S-adenosyl-L-methionine = 2-methyladenosine(37) in tRNA + 5'-deoxyadenosine + L-methionine + 2 oxidized [2Fe-2S]-[ferredoxin] + S-adenosyl-L-homocysteine. Its function is as follows. Specifically methylates position 2 of adenine 2503 in 23S rRNA and position 2 of adenine 37 in tRNAs. m2A2503 modification seems to play a crucial role in the proofreading step occurring at the peptidyl transferase center and thus would serve to optimize ribosomal fidelity. The chain is Dual-specificity RNA methyltransferase RlmN from Paracoccus denitrificans (strain Pd 1222).